The sequence spans 213 residues: 3-demethoxyubiquinol 3-hydroxylase (213 aa).

Residues Glu62, Glu92, His95, Glu144, Glu176, and His179 each contribute to the Fe cation site.

The protein belongs to the COQ7 family. It depends on Fe cation as a cofactor.

The protein resides in the cell membrane. The catalysed reaction is a 5-methoxy-2-methyl-3-(all-trans-polyprenyl)benzene-1,4-diol + AH2 + O2 = a 3-demethylubiquinol + A + H2O. The protein operates within cofactor biosynthesis; ubiquinone biosynthesis. In terms of biological role, catalyzes the hydroxylation of 2-nonaprenyl-3-methyl-6-methoxy-1,4-benzoquinol during ubiquinone biosynthesis. The polypeptide is 3-demethoxyubiquinol 3-hydroxylase (Chromohalobacter salexigens (strain ATCC BAA-138 / DSM 3043 / CIP 106854 / NCIMB 13768 / 1H11)).